Reading from the N-terminus, the 263-residue chain is uncharacterized protein (263 aa).

Gly31 to Thr38 contributes to the ATP binding site.

This sequence belongs to the CbbQ/NirQ/NorQ/GpvN family.

This is an uncharacterized protein from Staphylococcus saprophyticus subsp. saprophyticus (strain ATCC 15305 / DSM 20229 / NCIMB 8711 / NCTC 7292 / S-41).